The sequence spans 789 residues: UPF0313 protein VC_1711 (789 aa).

The region spanning A363 to A642 is the Radical SAM core domain. Residues C377, C381, and C384 each contribute to the [4Fe-4S] cluster site. The segment at P669–R789 is disordered. The segment covering K683–H698 has biased composition (basic residues). 3 stretches are compositionally biased toward polar residues: residues R716–G726, P733–S763, and R778–R789.

Belongs to the UPF0313 family. It depends on [4Fe-4S] cluster as a cofactor.

This is UPF0313 protein VC_1711 from Vibrio cholerae serotype O1 (strain ATCC 39315 / El Tor Inaba N16961).